The sequence spans 131 residues: Profilin-4 (131 aa).

Cysteines 13 and 115 form a disulfide. An Involved in PIP2 interaction motif is present at residues 81 to 97 (VVIRGKKGTGGITIKKT). Residue Thr-111 is modified to Phosphothreonine.

It belongs to the profilin family. Occurs in many kinds of cells as a complex with monomeric actin in a 1:1 ratio. Post-translationally, phosphorylated by MAP kinases. In terms of tissue distribution, expressed predominantly in endosperm but is also found at low levels in all tissues examined, including mature and germinated pollen.

It localises to the cytoplasm. Its subcellular location is the cytoskeleton. In terms of biological role, binds to actin and affects the structure of the cytoskeleton. At high concentrations, profilin prevents the polymerization of actin, whereas it enhances it at low concentrations. By binding to PIP2, it inhibits the formation of IP3 and DG. Has a high affinity for poly-proline. The polypeptide is Profilin-4 (PRO4) (Zea mays (Maize)).